We begin with the raw amino-acid sequence, 302 residues long: 4-hydroxy-tetrahydrodipicolinate synthase (302 aa).

T57 is a binding site for pyruvate. Catalysis depends on Y145, which acts as the Proton donor/acceptor. The active-site Schiff-base intermediate with substrate is the K173. A pyruvate-binding site is contributed by I213.

This sequence belongs to the DapA family. In terms of assembly, homotetramer; dimer of dimers.

It is found in the cytoplasm. It catalyses the reaction L-aspartate 4-semialdehyde + pyruvate = (2S,4S)-4-hydroxy-2,3,4,5-tetrahydrodipicolinate + H2O + H(+). It functions in the pathway amino-acid biosynthesis; L-lysine biosynthesis via DAP pathway; (S)-tetrahydrodipicolinate from L-aspartate: step 3/4. Catalyzes the condensation of (S)-aspartate-beta-semialdehyde [(S)-ASA] and pyruvate to 4-hydroxy-tetrahydrodipicolinate (HTPA). The chain is 4-hydroxy-tetrahydrodipicolinate synthase from Mycolicibacterium gilvum (strain PYR-GCK) (Mycobacterium gilvum (strain PYR-GCK)).